The following is a 204-amino-acid chain: Holliday junction branch migration complex subunit RuvA (204 aa).

The interval 1 to 64 (MIGRLQGILL…EDAHLLFGFS (64 aa)) is domain I. The interval 65 to 143 (AKTDRTLFRE…GIKQPDFFVE (79 aa)) is domain II. The tract at residues 144 to 155 (SSHVGAVDPVTT) is flexible linker. The interval 156-204 (SPEVPAEEAVAALMALGYKASDAEKMVKRIAKPHLTSEQLIREALKAAL) is domain III.

Belongs to the RuvA family. In terms of assembly, homotetramer. Forms an RuvA(8)-RuvB(12)-Holliday junction (HJ) complex. HJ DNA is sandwiched between 2 RuvA tetramers; dsDNA enters through RuvA and exits via RuvB. An RuvB hexamer assembles on each DNA strand where it exits the tetramer. Each RuvB hexamer is contacted by two RuvA subunits (via domain III) on 2 adjacent RuvB subunits; this complex drives branch migration. In the full resolvosome a probable DNA-RuvA(4)-RuvB(12)-RuvC(2) complex forms which resolves the HJ.

Its subcellular location is the cytoplasm. Its function is as follows. The RuvA-RuvB-RuvC complex processes Holliday junction (HJ) DNA during genetic recombination and DNA repair, while the RuvA-RuvB complex plays an important role in the rescue of blocked DNA replication forks via replication fork reversal (RFR). RuvA specifically binds to HJ cruciform DNA, conferring on it an open structure. The RuvB hexamer acts as an ATP-dependent pump, pulling dsDNA into and through the RuvAB complex. HJ branch migration allows RuvC to scan DNA until it finds its consensus sequence, where it cleaves and resolves the cruciform DNA. The polypeptide is Holliday junction branch migration complex subunit RuvA (Mannheimia succiniciproducens (strain KCTC 0769BP / MBEL55E)).